Here is a 125-residue protein sequence, read N- to C-terminus: Aspartate 1-decarboxylase (125 aa).

Ser-25 (schiff-base intermediate with substrate; via pyruvic acid) is an active-site residue. Ser-25 is subject to Pyruvic acid (Ser). Thr-57 provides a ligand contact to substrate. Tyr-58 (proton donor) is an active-site residue. Residue 73–75 (GAA) coordinates substrate.

This sequence belongs to the PanD family. In terms of assembly, heterooctamer of four alpha and four beta subunits. It depends on pyruvate as a cofactor. Post-translationally, is synthesized initially as an inactive proenzyme, which is activated by self-cleavage at a specific serine bond to produce a beta-subunit with a hydroxyl group at its C-terminus and an alpha-subunit with a pyruvoyl group at its N-terminus.

The protein localises to the cytoplasm. The enzyme catalyses L-aspartate + H(+) = beta-alanine + CO2. It functions in the pathway cofactor biosynthesis; (R)-pantothenate biosynthesis; beta-alanine from L-aspartate: step 1/1. Its function is as follows. Catalyzes the pyruvoyl-dependent decarboxylation of aspartate to produce beta-alanine. The protein is Aspartate 1-decarboxylase of Herpetosiphon aurantiacus (strain ATCC 23779 / DSM 785 / 114-95).